The primary structure comprises 309 residues: tRNA pseudouridine synthase B (309 aa).

D39 serves as the catalytic Nucleophile. In terms of domain architecture, PUA spans L229–F306.

The protein belongs to the pseudouridine synthase TruB family. Type 1 subfamily.

The catalysed reaction is uridine(55) in tRNA = pseudouridine(55) in tRNA. Its function is as follows. Responsible for synthesis of pseudouridine from uracil-55 in the psi GC loop of transfer RNAs. The polypeptide is tRNA pseudouridine synthase B (Thermotoga petrophila (strain ATCC BAA-488 / DSM 13995 / JCM 10881 / RKU-1)).